We begin with the raw amino-acid sequence, 693 residues long: Polyribonucleotide nucleotidyltransferase (693 aa).

Residues Asp489 and Asp495 each contribute to the Mg(2+) site. Residues 556–615 (PQIHVMNINPAKIKDVVGRGGATVKGIVEKTGAQIDTSDSGEVKVFAKDKKSMDMAVAMI) form the KH domain. One can recognise an S1 motif domain in the interval 625 to 693 (GQVYKGKIVK…GRVKLSLVAR (69 aa)).

It belongs to the polyribonucleotide nucleotidyltransferase family. In terms of assembly, component of the RNA degradosome, which is a multiprotein complex involved in RNA processing and mRNA degradation. Mg(2+) is required as a cofactor.

It localises to the cytoplasm. It carries out the reaction RNA(n+1) + phosphate = RNA(n) + a ribonucleoside 5'-diphosphate. In terms of biological role, involved in mRNA degradation. Catalyzes the phosphorolysis of single-stranded polyribonucleotides processively in the 3'- to 5'-direction. This chain is Polyribonucleotide nucleotidyltransferase, found in Francisella tularensis subsp. mediasiatica (strain FSC147).